A 194-amino-acid polypeptide reads, in one-letter code: Ribonuclease HII (194 aa).

The 191-residue stretch at 3–193 (ILTAGVDEAG…VRNLFAQQAL (191 aa)) folds into the RNase H type-2 domain. Positions 9, 10, and 101 each coordinate a divalent metal cation.

This sequence belongs to the RNase HII family. It depends on Mn(2+) as a cofactor. Mg(2+) serves as cofactor.

The protein resides in the cytoplasm. The catalysed reaction is Endonucleolytic cleavage to 5'-phosphomonoester.. Endonuclease that specifically degrades the RNA of RNA-DNA hybrids. This is Ribonuclease HII from Neisseria meningitidis serogroup C / serotype 2a (strain ATCC 700532 / DSM 15464 / FAM18).